A 145-amino-acid polypeptide reads, in one-letter code: Basic phospholipase A2 GL1-1 (145 aa).

A signal peptide spans 1–21 (MYPAHLLVLLAVCVSLLGASA). The propeptide occupies 22-27 (IPPLPL). Intrachain disulfides connect cysteine 38–cysteine 98, cysteine 54–cysteine 144, cysteine 56–cysteine 72, cysteine 71–cysteine 125, cysteine 78–cysteine 118, cysteine 87–cysteine 111, and cysteine 105–cysteine 116. The Ca(2+) site is built by tyrosine 55, glycine 57, and glycine 59. Histidine 75 is a catalytic residue. A Ca(2+)-binding site is contributed by aspartate 76. The active site involves aspartate 119.

This sequence belongs to the phospholipase A2 family. Group I subfamily. D49 sub-subfamily. It depends on Ca(2+) as a cofactor. In terms of tissue distribution, expressed by the venom gland.

Its subcellular location is the secreted. The catalysed reaction is a 1,2-diacyl-sn-glycero-3-phosphocholine + H2O = a 1-acyl-sn-glycero-3-phosphocholine + a fatty acid + H(+). Its function is as follows. PLA2 catalyzes the calcium-dependent hydrolysis of the 2-acyl groups in 3-sn-phosphoglycerides. In Laticauda semifasciata (Black-banded sea krait), this protein is Basic phospholipase A2 GL1-1.